The following is a 235-amino-acid chain: Large ribosomal subunit protein bL25 (235 aa).

Positions 201 to 235 (PVAEAKGKGKAAKPAATAKPAAAAAKPAAKPKAKK) are disordered. Residues 212-228 (AKPAATAKPAAAAAKPA) show a composition bias toward low complexity.

The protein belongs to the bacterial ribosomal protein bL25 family. CTC subfamily. As to quaternary structure, part of the 50S ribosomal subunit; part of the 5S rRNA/L5/L18/L25 subcomplex. Contacts the 5S rRNA. Binds to the 5S rRNA independently of L5 and L18.

Functionally, this is one of the proteins that binds to the 5S RNA in the ribosome where it forms part of the central protuberance. The chain is Large ribosomal subunit protein bL25 from Verminephrobacter eiseniae (strain EF01-2).